Reading from the N-terminus, the 107-residue chain is U1-lycotoxin-Ls1b (107 aa).

A signal peptide spans 1-20 (MMKVLVVIALLVTLISYSSS). A propeptide spanning residues 21-41 (EGIDDLEADELLSLMANEQTR) is cleaved from the precursor. Disulfide bonds link cysteine 44–cysteine 59, cysteine 51–cysteine 68, cysteine 58–cysteine 86, and cysteine 70–cysteine 84.

The protein belongs to the neurotoxin 19 (CSTX) family. 04 (U1-Lctx) subfamily. As to expression, expressed by the venom gland.

Its subcellular location is the secreted. The protein is U1-lycotoxin-Ls1b of Lycosa singoriensis (Wolf spider).